The chain runs to 173 residues: Peptide deformylase (173 aa).

Cysteine 91 and histidine 133 together coordinate Fe cation. Residue glutamate 134 is part of the active site. Histidine 137 contributes to the Fe cation binding site.

Belongs to the polypeptide deformylase family. The cofactor is Fe(2+).

The enzyme catalyses N-terminal N-formyl-L-methionyl-[peptide] + H2O = N-terminal L-methionyl-[peptide] + formate. Functionally, removes the formyl group from the N-terminal Met of newly synthesized proteins. Requires at least a dipeptide for an efficient rate of reaction. N-terminal L-methionine is a prerequisite for activity but the enzyme has broad specificity at other positions. This chain is Peptide deformylase, found in Blochmanniella pennsylvanica (strain BPEN).